Here is a 490-residue protein sequence, read N- to C-terminus: Glutamate--tRNA ligase (490 aa).

Positions 13-23 (PSPTGTPHVGL) match the 'HIGH' region motif. A 'KMSKS' region motif is present at residues 257-261 (KLSKR). Lys-260 lines the ATP pocket.

It belongs to the class-I aminoacyl-tRNA synthetase family. Glutamate--tRNA ligase type 1 subfamily. In terms of assembly, monomer.

The protein localises to the cytoplasm. It carries out the reaction tRNA(Glu) + L-glutamate + ATP = L-glutamyl-tRNA(Glu) + AMP + diphosphate. Functionally, catalyzes the attachment of glutamate to tRNA(Glu) in a two-step reaction: glutamate is first activated by ATP to form Glu-AMP and then transferred to the acceptor end of tRNA(Glu). This Mycobacterium tuberculosis (strain ATCC 25177 / H37Ra) protein is Glutamate--tRNA ligase.